A 262-amino-acid chain; its full sequence is Nodulation protein J (262 aa).

Residues 33–259 form the ABC transmembrane type-2 domain; that stretch reads ASLLGHLAEP…FLSTALLRRR (227 aa). A run of 6 helical transmembrane segments spans residues 35–55, 60–80, 125–145, 148–168, 177–197, and 231–251; these read LLGHLAEPLIYLFGLGAGLGV, VGGVSYTAFLAAGMVATSAMT, AALAGAGIGVVAAALGYTQWL, LYALPVIALTGLAFASLGMVV, YFIFYQTLVITPILFLSGAVF, and VVDVCQHVGALCIYIVIPFFL.

It belongs to the ABC-2 integral membrane protein family. Lipooligosaccharide exporter (TC 3.A.1.102) subfamily. As to quaternary structure, the complex is composed of two ATP-binding proteins (NodI) and two transmembrane proteins (NodJ).

It is found in the cell inner membrane. Part of the ABC transporter complex NodIJ involved in the export of the nodulation factors (Nod factors), the bacterial signal molecules that induce symbiosis and subsequent nodulation induction. Nod factors are LCO (lipo-chitin oligosaccharide), a modified beta-1,4-linked N-acetylglucosamine oligosaccharide. This subunit encodes the transporter. This is Nodulation protein J (nodJ) from Rhizobium leguminosarum bv. trifolii.